A 412-amino-acid polypeptide reads, in one-letter code: MAQRQFFGLTYNFYGQPAPLFDLNDLQELAGCYARPWTSRFSHLAISTGSLPVWSARYPSVASRNIIVNTLLGAHLNPFAGGQVTSHQGITWRDPVLSSLAPVPAIQPPPVWAVAENVPLDSNNYPTYVLNLSSMWPINQDVHIMTMWALSDQGPIYHLEVPVDPMPAATTAALMAYIGVPIAHLAQTAYRFAGQLPQSPDSTMVSTIRWLSAIWFGSLTGRLNRSRTCNGFYFEFAKPALNPDQAVLKWNDGARAAPPAAAQSSYMRCISPHWQHQIVEVAGALMSQSVTAVTGLPALIDEATLPAWSQGVANLTGNGQGVVPCLDYNPVPMAAARHLQWRQDGLITAAQEAQLNNDYTAYALTIERHLTAMLVANPIAAGRMPIQPFNAADFGQAGQTAAAVALAQAMFV.

It belongs to the reoviridae clamp protein family. Interacts with capsid proteins VP3, VP5 and VP7.

The protein resides in the virion. Functionally, located at the interface of the incomplete T=13 outer capsid and the pseudo T=2 inner capsid, 120 VP6 subunits clamp and stabilizes the inner capsid shell. The sequence is that of Clamp protein VP6 (S8) from Aquareovirus C (isolate Golden shiner/USA/GSRV/1977) (AQRV-C).